Here is a 220-residue protein sequence, read N- to C-terminus: Ribosomal RNA large subunit methyltransferase E (220 aa).

Residues Gly60, Trp62, Asp92, Asp108, and Asp133 each coordinate S-adenosyl-L-methionine. Residue Lys173 is the Proton acceptor of the active site. The segment at 198 to 220 is disordered; that stretch reads KPKASRDKSSETFILGRQLKHPR.

Belongs to the class I-like SAM-binding methyltransferase superfamily. RNA methyltransferase RlmE family.

The protein resides in the cytoplasm. It carries out the reaction uridine(2552) in 23S rRNA + S-adenosyl-L-methionine = 2'-O-methyluridine(2552) in 23S rRNA + S-adenosyl-L-homocysteine + H(+). Functionally, specifically methylates the uridine in position 2552 of 23S rRNA at the 2'-O position of the ribose in the fully assembled 50S ribosomal subunit. The polypeptide is Ribosomal RNA large subunit methyltransferase E (Burkholderia cenocepacia (strain HI2424)).